A 436-amino-acid polypeptide reads, in one-letter code: GTPase Der (436 aa).

2 consecutive EngA-type G domains span residues 4–167 and 175–351; these read PIVA…PDEA and IRFS…DNHR. Residues 10-17, 57-61, 119-122, 181-188, 229-233, and 294-297 each bind GTP; these read GRPNVGKS, DTGGI, NKVD, DTAGM, and NKWD. In terms of domain architecture, KH-like spans 352-436; that stretch reads KRITSSTLND…PIKLIVRARK (85 aa).

This sequence belongs to the TRAFAC class TrmE-Era-EngA-EngB-Septin-like GTPase superfamily. EngA (Der) GTPase family. In terms of assembly, associates with the 50S ribosomal subunit.

Its function is as follows. GTPase that plays an essential role in the late steps of ribosome biogenesis. This is GTPase Der from Leuconostoc mesenteroides subsp. mesenteroides (strain ATCC 8293 / DSM 20343 / BCRC 11652 / CCM 1803 / JCM 6124 / NCDO 523 / NBRC 100496 / NCIMB 8023 / NCTC 12954 / NRRL B-1118 / 37Y).